Here is a 267-residue protein sequence, read N- to C-terminus: Small ribosomal subunit protein eS4 (267 aa).

Residues 42-104 (LPLILVLRNR…TKENFRLLFD (63 aa)) form the S4 RNA-binding domain.

The protein belongs to the eukaryotic ribosomal protein eS4 family.

Its subcellular location is the cytoplasm. The chain is Small ribosomal subunit protein eS4 (rps4) from Dictyostelium discoideum (Social amoeba).